A 73-amino-acid chain; its full sequence is UPF0270 protein SG2298 (73 aa).

This sequence belongs to the UPF0270 family.

The protein is UPF0270 protein SG2298 of Sodalis glossinidius (strain morsitans).